The chain runs to 381 residues: MLKRSSLIYLSCVLIITIPILLHVYNGPGLSHEANEHRASHKQKRTLANPDKPKSENDEDLFCAVTNPVTGSYIDLSQLSSTPNKLREGQKQISGNNKHESSKTKWSVRGWGYDTNFTLGICSSPVGEAESQQLSNLTGAFYVDQLNENNLVSIGDFSTRPALVGGSTAKKLTLKYENGSMCPNGKDKKATLLNFVCDKEIQSKAQISYIGNLHNCSYFFEVRSIHACPTSNKKNEVNVLGIFIGIFAIFFLVEFAGRRWIYAKLNRHLKNDDELHDISPSLNEQPHWDLIEDGSRWSKFFNGIIKTTRRFTKSLMRSLVRGRNSRQGGIRLRSSPSASSSSLANREFFRDMEAQNEIIDSLDINSHTTESDHPTLADNSV.

The N-terminal stretch at 1 to 23 (MLKRSSLIYLSCVLIITIPILLH) is a signal peptide. The Lumenal portion of the chain corresponds to 24–236 (VYNGPGLSHE…ACPTSNKKNE (213 aa)). Disordered stretches follow at residues 33-57 (EANE…KSEN) and 81-104 (STPN…SSKT). In terms of domain architecture, MRH spans 61-230 (LFCAVTNPVT…EVRSIHACPT (170 aa)). Cysteines 63 and 122 form a disulfide. Residues Asn-116, Asn-136, Asn-178, and Asn-215 are each glycosylated (N-linked (GlcNAc...) asparagine). Intrachain disulfides connect Cys-182–Cys-216 and Cys-197–Cys-228. The helical transmembrane segment at 237–257 (VNVLGIFIGIFAIFFLVEFAG) threads the bilayer. Topologically, residues 258–381 (RRWIYAKLNR…DHPTLADNSV (124 aa)) are cytoplasmic. Phosphoserine occurs at positions 335, 339, 342, 371, and 380. Residues 360-381 (DSLDINSHTTESDHPTLADNSV) are disordered.

This sequence belongs to the MRL1/IGF2R family.

It is found in the golgi apparatus. The protein localises to the trans-Golgi network membrane. It localises to the endosome membrane. In terms of biological role, sorting receptor involved in the transport of vacuolar enzymes from the Golgi complex to the vacuole. Involved in the delivery and maturation of PEP4 (vacuolar proteinase A) and PRB1 (vacuolar proteinase B). The protein is Mannose 6-phosphate receptor-like protein 1 (MRL1) of Saccharomyces cerevisiae (strain ATCC 204508 / S288c) (Baker's yeast).